A 251-amino-acid chain; its full sequence is Ditrans,polycis-undecaprenyl-diphosphate synthase ((2E,6E)-farnesyl-diphosphate specific) (251 aa).

Asp-29 is a catalytic residue. Asp-29 lines the Mg(2+) pocket. Residues 30–33, Trp-34, Arg-42, His-46, and 74–76 each bind substrate; these read GNGK and SSD. The active-site Proton acceptor is the Asn-77. Substrate contacts are provided by residues Trp-78, Arg-80, Arg-197, and 203–205; that span reads RLS. Glu-216 is a binding site for Mg(2+).

It belongs to the UPP synthase family. Homodimer. Mg(2+) is required as a cofactor.

The catalysed reaction is 8 isopentenyl diphosphate + (2E,6E)-farnesyl diphosphate = di-trans,octa-cis-undecaprenyl diphosphate + 8 diphosphate. Its function is as follows. Catalyzes the sequential condensation of isopentenyl diphosphate (IPP) with (2E,6E)-farnesyl diphosphate (E,E-FPP) to yield (2Z,6Z,10Z,14Z,18Z,22Z,26Z,30Z,34E,38E)-undecaprenyl diphosphate (di-trans,octa-cis-UPP). UPP is the precursor of glycosyl carrier lipid in the biosynthesis of bacterial cell wall polysaccharide components such as peptidoglycan and lipopolysaccharide. This chain is Ditrans,polycis-undecaprenyl-diphosphate synthase ((2E,6E)-farnesyl-diphosphate specific), found in Buchnera aphidicola subsp. Baizongia pistaciae (strain Bp).